A 245-amino-acid chain; its full sequence is 4-hydroxy-tetrahydrodipicolinate reductase (245 aa).

NAD(+) is bound by residues G7–V12, D33, G75–T77, and A102–F105. H132 (proton donor/acceptor) is an active-site residue. H133 contacts (S)-2,3,4,5-tetrahydrodipicolinate. K136 (proton donor) is an active-site residue. G142 to T143 is a binding site for (S)-2,3,4,5-tetrahydrodipicolinate.

The protein belongs to the DapB family.

Its subcellular location is the cytoplasm. It catalyses the reaction (S)-2,3,4,5-tetrahydrodipicolinate + NAD(+) + H2O = (2S,4S)-4-hydroxy-2,3,4,5-tetrahydrodipicolinate + NADH + H(+). The enzyme catalyses (S)-2,3,4,5-tetrahydrodipicolinate + NADP(+) + H2O = (2S,4S)-4-hydroxy-2,3,4,5-tetrahydrodipicolinate + NADPH + H(+). Its pathway is amino-acid biosynthesis; L-lysine biosynthesis via DAP pathway; (S)-tetrahydrodipicolinate from L-aspartate: step 4/4. Its function is as follows. Catalyzes the conversion of 4-hydroxy-tetrahydrodipicolinate (HTPA) to tetrahydrodipicolinate. This Mycolicibacterium paratuberculosis (strain ATCC BAA-968 / K-10) (Mycobacterium paratuberculosis) protein is 4-hydroxy-tetrahydrodipicolinate reductase.